Reading from the N-terminus, the 249-residue chain is Phosphoadenosine 5'-phosphosulfate reductase (249 aa).

Catalysis depends on cysteine 230, which acts as the Nucleophile; cysteine thiosulfonate intermediate.

The protein belongs to the PAPS reductase family. CysH subfamily.

It is found in the cytoplasm. It carries out the reaction [thioredoxin]-disulfide + sulfite + adenosine 3',5'-bisphosphate + 2 H(+) = [thioredoxin]-dithiol + 3'-phosphoadenylyl sulfate. The protein operates within sulfur metabolism; hydrogen sulfide biosynthesis; sulfite from sulfate: step 3/3. Its function is as follows. Catalyzes the formation of sulfite from phosphoadenosine 5'-phosphosulfate (PAPS) using thioredoxin as an electron donor. The sequence is that of Phosphoadenosine 5'-phosphosulfate reductase from Synechocystis sp. (strain ATCC 27184 / PCC 6803 / Kazusa).